A 1577-amino-acid chain; its full sequence is Pentafunctional AROM polypeptide (1577 aa).

The interval 1–392 is 3-dehydroquinate synthase; that stretch reads MASVGLEKVN…YGTSAHVVSD (392 aa). NAD(+) is bound by residues 80-83, 111-113, and Asp116; these read ETYK and GGV. A 7-phospho-2-dehydro-3-deoxy-D-arabino-heptonate-binding site is contributed by Arg127. Residue 136-137 participates in NAD(+) binding; it reads TS. The 7-phospho-2-dehydro-3-deoxy-D-arabino-heptonate site is built by Asp143 and Lys149. Lys158 contacts NAD(+). Position 159 (Asn159) interacts with 7-phospho-2-dehydro-3-deoxy-D-arabino-heptonate. Residues 176–179 and Asn187 contribute to the NAD(+) site; that span reads WLET. Glu191 is a Zn(2+) binding site. Residues 191-194 and Lys258 each bind 7-phospho-2-dehydro-3-deoxy-D-arabino-heptonate; that span reads EVIK. Glu268 functions as the Proton acceptor; for 3-dehydroquinate synthase activity in the catalytic mechanism. 7-phospho-2-dehydro-3-deoxy-D-arabino-heptonate-binding positions include 272–276 and His279; that span reads RNLLN. His279 contributes to the Zn(2+) binding site. His283 (proton acceptor; for 3-dehydroquinate synthase activity) is an active-site residue. 7-phospho-2-dehydro-3-deoxy-D-arabino-heptonate contacts are provided by His295 and Lys364. Zn(2+) is bound at residue His295. Residues 405-863 are EPSP synthase; sequence VYPFTDVRSS…WDVLHSRLGA (459 aa). The active-site For EPSP synthase activity is Cys845. Positions 882 to 1071 are shikimate kinase; the sequence is VVLIGMRAAG…VPVKRSTFVC (190 aa). An ATP-binding site is contributed by 886–893; it reads GMRAAGKS. Positions 1072–1284 are 3-dehydroquinase; it reads LTFQNLLPEM…AAPGQLTLRQ (213 aa). Residue His1189 is the Proton acceptor; for 3-dehydroquinate dehydratase activity of the active site. The active-site Schiff-base intermediate with substrate; for 3-dehydroquinate dehydratase activity is the Lys1218. The segment at 1297–1577 is shikimate dehydrogenase; that stretch reads PKKMFVVGSP…APVYDAVTQE (281 aa).

This sequence in the N-terminal section; belongs to the sugar phosphate cyclases superfamily. Dehydroquinate synthase family. In the 2nd section; belongs to the EPSP synthase family. It in the 3rd section; belongs to the shikimate kinase family. The protein in the 4th section; belongs to the type-I 3-dehydroquinase family. This sequence in the C-terminal section; belongs to the shikimate dehydrogenase family. In terms of assembly, homodimer. Zn(2+) is required as a cofactor.

It is found in the cytoplasm. It catalyses the reaction 7-phospho-2-dehydro-3-deoxy-D-arabino-heptonate = 3-dehydroquinate + phosphate. The enzyme catalyses 3-dehydroquinate = 3-dehydroshikimate + H2O. It carries out the reaction shikimate + NADP(+) = 3-dehydroshikimate + NADPH + H(+). The catalysed reaction is shikimate + ATP = 3-phosphoshikimate + ADP + H(+). It catalyses the reaction 3-phosphoshikimate + phosphoenolpyruvate = 5-O-(1-carboxyvinyl)-3-phosphoshikimate + phosphate. It participates in metabolic intermediate biosynthesis; chorismate biosynthesis; chorismate from D-erythrose 4-phosphate and phosphoenolpyruvate: step 2/7. Its pathway is metabolic intermediate biosynthesis; chorismate biosynthesis; chorismate from D-erythrose 4-phosphate and phosphoenolpyruvate: step 3/7. The protein operates within metabolic intermediate biosynthesis; chorismate biosynthesis; chorismate from D-erythrose 4-phosphate and phosphoenolpyruvate: step 4/7. It functions in the pathway metabolic intermediate biosynthesis; chorismate biosynthesis; chorismate from D-erythrose 4-phosphate and phosphoenolpyruvate: step 5/7. It participates in metabolic intermediate biosynthesis; chorismate biosynthesis; chorismate from D-erythrose 4-phosphate and phosphoenolpyruvate: step 6/7. Its function is as follows. The AROM polypeptide catalyzes 5 consecutive enzymatic reactions in prechorismate polyaromatic amino acid biosynthesis. This chain is Pentafunctional AROM polypeptide, found in Eremothecium gossypii (strain ATCC 10895 / CBS 109.51 / FGSC 9923 / NRRL Y-1056) (Yeast).